The chain runs to 295 residues: Protoheme IX farnesyltransferase (295 aa).

9 helical membrane passes run 8-28 (VTKP…FLLA), 35-55 (YPLF…GCVF), 84-104 (ASLV…WFGA), 107-127 (LACW…SLYM), 132-152 (VYGT…GYCA), 162-182 (AILL…IAIF), 208-228 (ITLY…GGYA), 233-253 (LVVA…GYKV), and 264-284 (FVFS…DFMV).

Belongs to the UbiA prenyltransferase family. Protoheme IX farnesyltransferase subfamily.

The protein resides in the cell inner membrane. The catalysed reaction is heme b + (2E,6E)-farnesyl diphosphate + H2O = Fe(II)-heme o + diphosphate. Its pathway is porphyrin-containing compound metabolism; heme O biosynthesis; heme O from protoheme: step 1/1. In terms of biological role, converts heme B (protoheme IX) to heme O by substitution of the vinyl group on carbon 2 of heme B porphyrin ring with a hydroxyethyl farnesyl side group. The sequence is that of Protoheme IX farnesyltransferase from Klebsiella pneumoniae subsp. pneumoniae (strain ATCC 700721 / MGH 78578).